The chain runs to 658 residues: Methionine--tRNA ligase (658 aa).

The short motif at 9–19 (PYANGKAHVGH) is the 'HIGH' region element. Zn(2+) contacts are provided by cysteine 140, cysteine 143, cysteine 152, and cysteine 156. The short motif at 322–326 (TFSKS) is the 'KMSKS' region element. Lysine 325 lines the ATP pocket. Residues 558-658 (DFQKLDIRIG…KEVEPGTRVC (101 aa)) form the tRNA-binding domain.

It belongs to the class-I aminoacyl-tRNA synthetase family. MetG type 1 subfamily. As to quaternary structure, homodimer. Zn(2+) is required as a cofactor.

Its subcellular location is the cytoplasm. It carries out the reaction tRNA(Met) + L-methionine + ATP = L-methionyl-tRNA(Met) + AMP + diphosphate. Is required not only for elongation of protein synthesis but also for the initiation of all mRNA translation through initiator tRNA(fMet) aminoacylation. The chain is Methionine--tRNA ligase from Archaeoglobus fulgidus (strain ATCC 49558 / DSM 4304 / JCM 9628 / NBRC 100126 / VC-16).